We begin with the raw amino-acid sequence, 316 residues long: Cytochrome c biogenesis protein CcsA (316 aa).

8 helical membrane passes run 19-39, 47-67, 77-97, 106-126, 151-171, 224-244, 258-275, and 285-305; these read VLTL…FSFW, SSIV…QLVF, ISNL…IQLL, LIQA…SFVL, VIMC…VVLL, TITF…VWAN, TWAF…HTRL, and AIIA…VNFL.

The protein belongs to the CcmF/CycK/Ccl1/NrfE/CcsA family. May interact with ccs1.

The protein localises to the cellular thylakoid membrane. Its function is as follows. Required during biogenesis of c-type cytochromes (cytochrome c6 and cytochrome f) at the step of heme attachment. This chain is Cytochrome c biogenesis protein CcsA, found in Prochlorococcus marinus (strain SARG / CCMP1375 / SS120).